The following is a 1006-amino-acid chain: DNA polymerase (1006 aa).

This sequence belongs to the DNA polymerase type-B family. Interacts with OPG148. Component of the Uracil-DNA glycosylase(UDG)-OPG148-polymerase complex; OPG148 and OPG116/UDG form a heterodimeric processivity factor that associates with OPG071 to form the processive polymerase holoenzyme.

It catalyses the reaction DNA(n) + a 2'-deoxyribonucleoside 5'-triphosphate = DNA(n+1) + diphosphate. In terms of biological role, catalyzes DNA synthesis. Acquires processivity by associating with a heterodimeric processivity factor comprised of the viral OPG148 and OPG116 proteins, thereby forming the DNA polymerase holoenzyme. Displays 3'- to 5' exonuclease activity. Might participate in viral DNA recombination. Does not perform OPG116/D4synthesis across an abasic site. In Homo sapiens (Human), this protein is DNA polymerase (OPG071).